Reading from the N-terminus, the 268-residue chain is Indole-3-glycerol phosphate synthase (268 aa).

Belongs to the TrpC family.

The enzyme catalyses 1-(2-carboxyphenylamino)-1-deoxy-D-ribulose 5-phosphate + H(+) = (1S,2R)-1-C-(indol-3-yl)glycerol 3-phosphate + CO2 + H2O. Its pathway is amino-acid biosynthesis; L-tryptophan biosynthesis; L-tryptophan from chorismate: step 4/5. The protein is Indole-3-glycerol phosphate synthase of Acinetobacter baumannii (strain ACICU).